The following is a 249-amino-acid chain: 5'-nucleotidase SurE (249 aa).

A divalent metal cation contacts are provided by Asp-9, Asp-10, Ser-40, and Asn-92.

It belongs to the SurE nucleotidase family. A divalent metal cation is required as a cofactor.

It is found in the cytoplasm. It carries out the reaction a ribonucleoside 5'-phosphate + H2O = a ribonucleoside + phosphate. Functionally, nucleotidase that shows phosphatase activity on nucleoside 5'-monophosphates. The chain is 5'-nucleotidase SurE from Shewanella baltica (strain OS195).